The following is a 263-amino-acid chain: 3-deoxy-manno-octulosonate cytidylyltransferase (263 aa).

This sequence belongs to the KdsB family.

It localises to the cytoplasm. It carries out the reaction 3-deoxy-alpha-D-manno-oct-2-ulosonate + CTP = CMP-3-deoxy-beta-D-manno-octulosonate + diphosphate. It participates in nucleotide-sugar biosynthesis; CMP-3-deoxy-D-manno-octulosonate biosynthesis; CMP-3-deoxy-D-manno-octulosonate from 3-deoxy-D-manno-octulosonate and CTP: step 1/1. Its pathway is bacterial outer membrane biogenesis; lipopolysaccharide biosynthesis. In terms of biological role, activates KDO (a required 8-carbon sugar) for incorporation into bacterial lipopolysaccharide in Gram-negative bacteria. The polypeptide is 3-deoxy-manno-octulosonate cytidylyltransferase (Burkholderia multivorans (strain ATCC 17616 / 249)).